Reading from the N-terminus, the 368-residue chain is 3-isopropylmalate dehydrogenase (368 aa).

Position 79 to 92 (79 to 92) interacts with NAD(+); the sequence is GPRYEGLPWDLRPE. Substrate-binding residues include Arg-99, Arg-109, Arg-138, and Asp-228. Mg(2+) is bound by residues Asp-228, Asp-252, and Asp-256. An NAD(+)-binding site is contributed by 292–304; it reads GSAPDIAGQDRAN.

Belongs to the isocitrate and isopropylmalate dehydrogenases family. LeuB type 1 subfamily. In terms of assembly, homodimer. Mg(2+) is required as a cofactor. The cofactor is Mn(2+).

It localises to the cytoplasm. The enzyme catalyses (2R,3S)-3-isopropylmalate + NAD(+) = 4-methyl-2-oxopentanoate + CO2 + NADH. The protein operates within amino-acid biosynthesis; L-leucine biosynthesis; L-leucine from 3-methyl-2-oxobutanoate: step 3/4. Functionally, catalyzes the oxidation of 3-carboxy-2-hydroxy-4-methylpentanoate (3-isopropylmalate) to 3-carboxy-4-methyl-2-oxopentanoate. The product decarboxylates to 4-methyl-2 oxopentanoate. This is 3-isopropylmalate dehydrogenase from Symbiobacterium thermophilum (strain DSM 24528 / JCM 14929 / IAM 14863 / T).